The sequence spans 196 residues: Molybdenum cofactor guanylyltransferase (196 aa).

Residues 10-12 (LAG), Lys-23, Asn-51, Asp-69, and Asp-99 contribute to the GTP site. Asp-99 provides a ligand contact to Mg(2+).

This sequence belongs to the MobA family. Monomer. Requires Mg(2+) as cofactor.

The protein localises to the cytoplasm. It carries out the reaction Mo-molybdopterin + GTP + H(+) = Mo-molybdopterin guanine dinucleotide + diphosphate. In terms of biological role, transfers a GMP moiety from GTP to Mo-molybdopterin (Mo-MPT) cofactor (Moco or molybdenum cofactor) to form Mo-molybdopterin guanine dinucleotide (Mo-MGD) cofactor. The protein is Molybdenum cofactor guanylyltransferase of Shewanella frigidimarina (strain NCIMB 400).